A 329-amino-acid chain; its full sequence is GTPase Obg (329 aa).

The Obg domain occupies 1–159 (MQFIDQARIS…WPLQLELKLL (159 aa)). Residues 160-328 (AEVGIIGLPN…MLDRVWSELG (169 aa)) form the OBG-type G domain. ATP-binding positions include 166–173 (GLPNAGKS), 191–195 (FTTLI), 213–216 (DIPG), 280–283 (NKQE), and 309–311 (SAA). The Mg(2+) site is built by S173 and T193.

It belongs to the TRAFAC class OBG-HflX-like GTPase superfamily. OBG GTPase family. Monomer. It depends on Mg(2+) as a cofactor.

The protein localises to the cytoplasm. In terms of biological role, an essential GTPase which binds GTP, GDP and possibly (p)ppGpp with moderate affinity, with high nucleotide exchange rates and a fairly low GTP hydrolysis rate. Plays a role in control of the cell cycle, stress response, ribosome biogenesis and in those bacteria that undergo differentiation, in morphogenesis control. The protein is GTPase Obg of Synechococcus sp. (strain CC9311).